Here is a 256-residue protein sequence, read N- to C-terminus: Small ribosomal subunit protein eS1 (256 aa).

Ala2 is subject to N-acetylalanine; partial.

It belongs to the eukaryotic ribosomal protein eS1 family. Component of the small ribosomal subunit. Mature ribosomes consist of a small (40S) and a large (60S) subunit. The 40S subunit contains about 33 different proteins and 1 molecule of RNA (18S). The 60S subunit contains about 49 different proteins and 3 molecules of RNA (25S, 5.8S and 5S).

The protein localises to the cytoplasm. This is Small ribosomal subunit protein eS1 from Eremothecium gossypii (strain ATCC 10895 / CBS 109.51 / FGSC 9923 / NRRL Y-1056) (Yeast).